A 76-amino-acid polypeptide reads, in one-letter code: Esculentin-2MT1 (76 aa).

The signal sequence occupies residues 1–22 (MFTMKKPLLLLFFLGTISLSLC). Residues 23–37 (EEERNADEDDGEKEV) constitute a propeptide that is removed on maturation. Cys70 and Cys76 are disulfide-bonded.

This sequence belongs to the frog skin active peptide (FSAP) family. Esculentin subfamily. Expressed by the skin glands.

The protein localises to the secreted. Functionally, antimicrobial peptide. This Amolops mantzorum (Sichuan torrent frog) protein is Esculentin-2MT1.